The primary structure comprises 141 residues: Nucleoside diphosphate kinase (141 aa).

Residues lysine 11, phenylalanine 59, arginine 87, threonine 93, arginine 104, and asparagine 114 each coordinate ATP. Histidine 117 serves as the catalytic Pros-phosphohistidine intermediate.

The protein belongs to the NDK family. As to quaternary structure, homotetramer. The cofactor is Mg(2+).

It is found in the cytoplasm. It carries out the reaction a 2'-deoxyribonucleoside 5'-diphosphate + ATP = a 2'-deoxyribonucleoside 5'-triphosphate + ADP. The catalysed reaction is a ribonucleoside 5'-diphosphate + ATP = a ribonucleoside 5'-triphosphate + ADP. Major role in the synthesis of nucleoside triphosphates other than ATP. The ATP gamma phosphate is transferred to the NDP beta phosphate via a ping-pong mechanism, using a phosphorylated active-site intermediate. The chain is Nucleoside diphosphate kinase from Pseudomonas fluorescens (strain SBW25).